A 650-amino-acid polypeptide reads, in one-letter code: Chaperone protein DnaK (650 aa).

T200 is subject to Phosphothreonine; by autocatalysis. Residues 611–636 (AQQAGAAGAAGAAAEGASAQGGAQPA) are compositionally biased toward low complexity. The interval 611–650 (AQQAGAAGAAGAAAEGASAQGGAQPADDVVDADFKEVKKD) is disordered.

This sequence belongs to the heat shock protein 70 family.

In terms of biological role, acts as a chaperone. The chain is Chaperone protein DnaK from Burkholderia mallei (strain NCTC 10247).